Consider the following 311-residue polypeptide: Progestin and adipoQ receptor family member 3 (311 aa).

A required for interaction with SREBF2 region spans residues 1-20; it reads MHQKLLKSAHYIELGSYQYW. Topologically, residues 1 to 73 are cytoplasmic; it reads MHQKLLKSAH…FILSNETVNI (73 aa). A required for interaction with SCAP region spans residues 41–60; it reads KDNPYITDGYRAYLPSRLCI. A golgi targeting region spans residues 61–71; it reads KSLFILSNETV. A helical membrane pass occupies residues 74-96; the sequence is WSHLLGFFLFFTLGIYDMTSVLP. The Lumenal segment spans residues 97–105; that stretch reads SASASREDF. A helical transmembrane segment spans residues 106–128; sequence VICSICLFCFQVCMLCSVGYHLF. The Cytoplasmic portion of the chain corresponds to 129-140; the sequence is SCHRSEKTCRRW. A helical membrane pass occupies residues 141–163; that stretch reads MALDYAGISIGILGCYVSGVFYA. Residues 164–172 lie on the Lumenal side of the membrane; sequence FYCNNYWRQ. A helical transmembrane segment spans residues 173–195; it reads VYLITVLAMILAVFFAQIHPNYL. Residues 196–201 lie on the Cytoplasmic side of the membrane; it reads TQQWQR. The chain crosses the membrane as a helical span at residues 202 to 224; that stretch reads LRSIIFCSVSGYGVIPTLHWVWL. Topologically, residues 225 to 238 are lumenal; the sequence is NGGIGAPIVQDFAP. Residues 239–256 form a helical membrane-spanning segment; the sequence is RVIVMYMIALLAFLFYIS. At 257–275 the chain is on the cytoplasmic side; that stretch reads KVPERYFPGQLNYLGSSHQ. Residues 276–298 traverse the membrane as a helical segment; that stretch reads IWHILAVVMLYWWHQSTVYVMQY. The tract at residues 299 to 303 is golgi targeting; the sequence is RHSKP. Topologically, residues 299–311 are lumenal; it reads RHSKPCPDYVSHL.

Belongs to the ADIPOR family. As to quaternary structure, interacts with SCAP and SREBF2; the interactions are direct, increase in low cholesterol conditions and tether SCAP:SREBP complex to the Golgi apparatus. Interaction with SCAP is mutually exclusive with INSIG1. In hepatocytes, interacts with PPARA and HUWE1; the interactions promote PPARA poylubiquitination and HUWE1-mediated degradation. In macrophages, interacts with PPARG and STUB1; the interactions promote PPARG poylubiquitination and STUB1-mediated degradation. In terms of tissue distribution, widely expressed in a range of tissues.

The protein localises to the golgi apparatus membrane. Golgi-scaffold protein which modulates its interactors acitivies by anchoring them to the Golgi apparatus. Functions as a spatial regulator of RAF1 kinase by sequestrating it to the Golgi apparatus. Acts as a positive regulator of cholesterol biosynthesis by mediating the anchoring of the SCAP:SREBP complex in the Golgi apparatus, thereby promoting SCAP:SREBF2 complex formation, potentiating SREBF2 and SREBF1 processing and enhancing lipid synthesis. Also regulates PPARA and PPARG functions by mediating their interaction with E3 ubiquitin ligases, such as STUB1 or HUWE1, leading to their polyubiquitination and proteasome-mediated degradation. The sequence is that of Progestin and adipoQ receptor family member 3 from Homo sapiens (Human).